Consider the following 1339-residue polypeptide: MEDWVSCRSEEQKRCEEKGQSTFDESEEEQWRRLKEEAMIDSDDSEGAAGDEGAVVLAEAKRRKPRKSGKVIATQKCAQPQNQHRHQQKLTKSLSTYDMENLLKQYRNISAEEEDEVDVDITKFLQDDGVDSEDGEGPSVTATELLSSLISGRSADTNKTEELADSFPLANLNDEVFTYENEAAVKKTPRNKEKRTNKSGANYVIKETVVEELNVVTDLAEVRTGSQHASTDFLNGCPPKALFYWFDAKEQPHTLTAPGTILLFGKVCMNEEDEEFRSCCVRIQHVHRNVFLLPKEGSTDAEVVQEINAICRGSGIEERRIKFVERYYAFEEPGVPREKNRWAKLVYPGRYPPFPNKGGLTHVQVVVGASRSLLELFLIKKRLMGPSYLEIEHLVTAMDRVSHCKTEFLVPSPKDIKVYNSSKPPPPFTVASIQLHAQLDSDGVKNEVIAASIALYGDVSIDGERKPNITECFTGVRQLSPDAPLPLDLETYCLSKRMPGVHRFINERALLTWFAETLAALDPDIIVGHNIIGYTVETLLNRYQELNIVRWSTIGRLDVRRFPRIQGNNFNLAIEKEACVGRLVVDTYLLAREYYKSTNYKLLSLSTQMEIKGITDNRGHFEPGSTVLVKDSMMSSEALCPILLQLLNCAVLSFNVASFLDVIPLTKRLTLLAGNLWSRTLYGARSERIEYLLLHAFHNLKFVTPDKKKRDLKRGREDDDDEGKRKTKYQGGMVLEPKSGLYSEYILLLDFNSLYPSLIQEFNVCYTTIDRDENTVSAEVPPPESLICLSCRAAGLPSPCLHKCILPKVIRGLVDSRREIKRMMKSEKDPGNLAMLEIRQLALKLTANSMYGCLGFEYSRFYAQPLAELVTRQGRLALQNTVELIPQISPSIRVIYGDTDSVMIQTGIKDDIVKVRNLGFEIKGKVNQRYQSLELDIDGVFRAMLLLRKKKYAALSVVDWQGEGKVYKREVKGLDMVRRDWCPLSQHVSDAVLKRILNAEGGEDILDFVIKYMKGVAQDVRSGNVYPLEEFVISKSLTKEPESYHGTGYPHAVVALRMKQRKEGVRVGDLIPYVICEGDEHIDDKAYHIDEVRRSDGLSVDVEWYLSSQLYPPVMRLCEHIQGFVPEQLSEAMCIASHMRTERDVKEEDTANDFSHCSIFKSRALSECFPTATALQVQCTHCQLVVPVDPHKYINDMFSSREKPPPTAPFELYVCFNCGRSLPLAYLANCMTQMCHTIIRQFYCSGGNVASVRALRAQFTYLRAMFDVPQALNCPSAVKNAHRVLSLRCLGTDRKLYTLADVERFPDVEPVDPLLACAESFYRRIDHLFVSLDKLFDTP.

2 disordered regions span residues 1 to 29 (MEDW…SEEE) and 60 to 89 (AKRR…HQQK). Residues 8–19 (RSEEQKRCEEKG) are compositionally biased toward basic and acidic residues. Zn(2+) is bound by residues C1179, C1182, C1215, C1218, C1235, C1244, C1274, and C1289. A CysA-type zinc finger spans residues 1179 to 1218 (CTHCQLVVPVDPHKYINDMFSSREKPPPTAPFELYVCFNC). A CysB motif motif is present at residues 1244–1274 (CSGGNVASVRALRAQFTYLRAMFDVPQALNC).

The protein belongs to the DNA polymerase type-B family.

It localises to the nucleus. The enzyme catalyses DNA(n) + a 2'-deoxyribonucleoside 5'-triphosphate = DNA(n+1) + diphosphate. In terms of biological role, polymerase alpha in a complex with DNA primase is a replicative polymerase. The sequence is that of DNA polymerase alpha catalytic subunit from Trypanosoma brucei brucei.